We begin with the raw amino-acid sequence, 456 residues long: Enolase (456 aa).

Q164 provides a ligand contact to (2R)-2-phosphoglycerate. Residue E207 is the Proton donor of the active site. Mg(2+) contacts are provided by D244, E287, and D314. (2R)-2-phosphoglycerate is bound by residues K339, R368, S369, and K390. K339 serves as the catalytic Proton acceptor.

It belongs to the enolase family. In terms of assembly, component of the RNA degradosome, a multiprotein complex involved in RNA processing and mRNA degradation. The cofactor is Mg(2+).

It is found in the cytoplasm. Its subcellular location is the secreted. The protein resides in the cell surface. The catalysed reaction is (2R)-2-phosphoglycerate = phosphoenolpyruvate + H2O. Its pathway is carbohydrate degradation; glycolysis; pyruvate from D-glyceraldehyde 3-phosphate: step 4/5. Functionally, catalyzes the reversible conversion of 2-phosphoglycerate (2-PG) into phosphoenolpyruvate (PEP). It is essential for the degradation of carbohydrates via glycolysis. This chain is Enolase, found in Francisella tularensis subsp. holarctica (strain LVS).